The primary structure comprises 662 residues: Bifunctional polymyxin resistance protein ArnA (662 aa).

Residues 1–307 (MTSKAVVFAY…ELGLVEGARL (307 aa)) form a formyltransferase ArnAFT region. His-106 functions as the Proton donor; for formyltransferase activity in the catalytic mechanism. Residues Arg-116 and 138-142 (IERAD) contribute to the (6R)-10-formyltetrahydrofolate site. Positions 316–662 (RRTRVLILGV…EALREREAQA (347 aa)) are dehydrogenase ArnADH. NAD(+) contacts are provided by residues Asp-349 and 370-371 (DI). UDP-alpha-D-glucuronate contacts are provided by residues Ala-395, Tyr-400, and 434 to 435 (TS). Residue Glu-436 is the Proton acceptor; for decarboxylase activity of the active site. Residues Arg-462, Asn-493, 527–536 (RLVDGGAQKR), and Tyr-614 each bind UDP-alpha-D-glucuronate. The active-site Proton donor; for decarboxylase activity is Arg-620.

In the N-terminal section; belongs to the Fmt family. UDP-L-Ara4N formyltransferase subfamily. It in the C-terminal section; belongs to the NAD(P)-dependent epimerase/dehydratase family. UDP-glucuronic acid decarboxylase subfamily. In terms of assembly, homohexamer, formed by a dimer of trimers.

It catalyses the reaction UDP-alpha-D-glucuronate + NAD(+) = UDP-beta-L-threo-pentopyranos-4-ulose + CO2 + NADH. The catalysed reaction is UDP-4-amino-4-deoxy-beta-L-arabinose + (6R)-10-formyltetrahydrofolate = UDP-4-deoxy-4-formamido-beta-L-arabinose + (6S)-5,6,7,8-tetrahydrofolate + H(+). It functions in the pathway nucleotide-sugar biosynthesis; UDP-4-deoxy-4-formamido-beta-L-arabinose biosynthesis; UDP-4-deoxy-4-formamido-beta-L-arabinose from UDP-alpha-D-glucuronate: step 1/3. The protein operates within nucleotide-sugar biosynthesis; UDP-4-deoxy-4-formamido-beta-L-arabinose biosynthesis; UDP-4-deoxy-4-formamido-beta-L-arabinose from UDP-alpha-D-glucuronate: step 3/3. It participates in bacterial outer membrane biogenesis; lipopolysaccharide biosynthesis. Bifunctional enzyme that catalyzes the oxidative decarboxylation of UDP-glucuronic acid (UDP-GlcUA) to UDP-4-keto-arabinose (UDP-Ara4O) and the addition of a formyl group to UDP-4-amino-4-deoxy-L-arabinose (UDP-L-Ara4N) to form UDP-L-4-formamido-arabinose (UDP-L-Ara4FN). The modified arabinose is attached to lipid A and is required for resistance to polymyxin and cationic antimicrobial peptides. In Pseudomonas aeruginosa (strain UCBPP-PA14), this protein is Bifunctional polymyxin resistance protein ArnA.